We begin with the raw amino-acid sequence, 315 residues long: Neuroguidin (315 aa).

At Ala2 the chain carries N-acetylalanine. The stretch at 13-41 forms a coiled coil; that stretch reads SAVTLLKNLQEQVMAVTAQVKSLTQKVQA. Residues 41–174 form a necessary for interaction with EIF4E region; sequence AGAYPTEKGL…KGVSKKYVPP (134 aa). Phosphoserine is present on residues Ser121, Ser142, and Ser143. Positions 124 to 169 are disordered; the sequence is ENDPLRFKPHPSNMMSKLSSEDEEEDEAEDDQSEASGKKSVKGVSK. Over residues 144–156 the composition is skewed to acidic residues; sequence EDEEEDEAEDDQS. Residues 181 to 205 adopt a coiled-coil conformation; the sequence is YDETEAEREKKRLERAKRRALSSSV. Residues Ser204 and Ser214 each carry the phosphoserine modification. The interval 277 to 315 is disordered; the sequence is DISALTGGTVHLDEDQNPIKKRKKIPQKGRKKKGFRRRR. Over residues 295 to 315 the composition is skewed to basic residues; that stretch reads IKKRKKIPQKGRKKKGFRRRR.

The protein belongs to the SAS10 family. In terms of assembly, part of the small subunit (SSU) processome, composed of more than 70 proteins and the RNA chaperone small nucleolar RNA (snoRNA) U3. Interacts with CPEB1 and EIF4E.

Its subcellular location is the nucleus. It is found in the nucleolus. It localises to the chromosome. The protein resides in the centromere. The protein localises to the cytoplasm. Its subcellular location is the cell projection. It is found in the axon. It localises to the dendrite. The protein resides in the filopodium. In terms of biological role, part of the small subunit (SSU) processome, first precursor of the small eukaryotic ribosomal subunit. During the assembly of the SSU processome in the nucleolus, many ribosome biogenesis factors, an RNA chaperone and ribosomal proteins associate with the nascent pre-rRNA and work in concert to generate RNA folding, modifications, rearrangements and cleavage as well as targeted degradation of pre-ribosomal RNA by the RNA exosome. Its dissociation from the complex determines the transition from state pre-A1 to state pre-A1*. Inhibits mRNA translation in a cytoplasmic polyadenylation element (CPE)-dependent manner. The protein is Neuroguidin of Homo sapiens (Human).